We begin with the raw amino-acid sequence, 60 residues long: Large ribosomal subunit protein bL32 (60 aa).

It belongs to the bacterial ribosomal protein bL32 family.

In Geobacter sulfurreducens (strain ATCC 51573 / DSM 12127 / PCA), this protein is Large ribosomal subunit protein bL32.